The chain runs to 383 residues: Alanine racemase (383 aa).

The active-site Proton acceptor; specific for D-alanine is K50. K50 is modified (N6-(pyridoxal phosphate)lysine). R151 serves as a coordination point for substrate. Y279 (proton acceptor; specific for L-alanine) is an active-site residue. Substrate is bound at residue M327.

Belongs to the alanine racemase family. The cofactor is pyridoxal 5'-phosphate.

The enzyme catalyses L-alanine = D-alanine. It functions in the pathway amino-acid biosynthesis; D-alanine biosynthesis; D-alanine from L-alanine: step 1/1. In terms of biological role, catalyzes the interconversion of L-alanine and D-alanine. May also act on other amino acids. The chain is Alanine racemase (alr) from Chlorobaculum tepidum (strain ATCC 49652 / DSM 12025 / NBRC 103806 / TLS) (Chlorobium tepidum).